The sequence spans 132 residues: Small ribosomal subunit protein uS8 (132 aa).

Belongs to the universal ribosomal protein uS8 family. As to quaternary structure, part of the 30S ribosomal subunit. Contacts proteins S5 and S12.

One of the primary rRNA binding proteins, it binds directly to 16S rRNA central domain where it helps coordinate assembly of the platform of the 30S subunit. This Alkaliphilus metalliredigens (strain QYMF) protein is Small ribosomal subunit protein uS8.